The primary structure comprises 467 residues: tRNA modification GTPase MnmE (467 aa).

(6S)-5-formyl-5,6,7,8-tetrahydrofolate contacts are provided by Arg-25, Glu-87, and Lys-130. Residues 226 to 389 (GLSVVLAGQP…LRGELLRIAG (164 aa)) enclose the TrmE-type G domain. Asn-236 is a binding site for K(+). Residues 236–241 (NVGKSS), 255–261 (TPIAGTT), and 280–283 (DTAG) contribute to the GTP site. Residue Ser-240 participates in Mg(2+) binding. K(+)-binding residues include Thr-255, Ile-257, and Thr-260. Thr-261 contacts Mg(2+). Position 467 (Lys-467) interacts with (6S)-5-formyl-5,6,7,8-tetrahydrofolate.

The protein belongs to the TRAFAC class TrmE-Era-EngA-EngB-Septin-like GTPase superfamily. TrmE GTPase family. In terms of assembly, homodimer. Heterotetramer of two MnmE and two MnmG subunits. The cofactor is K(+).

It localises to the cytoplasm. Functionally, exhibits a very high intrinsic GTPase hydrolysis rate. Involved in the addition of a carboxymethylaminomethyl (cmnm) group at the wobble position (U34) of certain tRNAs, forming tRNA-cmnm(5)s(2)U34. The protein is tRNA modification GTPase MnmE of Burkholderia mallei (strain NCTC 10247).